Reading from the N-terminus, the 151-residue chain is Nucleoside diphosphate kinase (151 aa).

Residues Lys-11, Phe-59, Arg-87, Thr-93, Arg-104, and Asn-114 each contribute to the ATP site. Residue His-117 is the Pros-phosphohistidine intermediate of the active site.

It belongs to the NDK family. Homotetramer. It depends on Mg(2+) as a cofactor.

It is found in the cytoplasm. The catalysed reaction is a 2'-deoxyribonucleoside 5'-diphosphate + ATP = a 2'-deoxyribonucleoside 5'-triphosphate + ADP. It catalyses the reaction a ribonucleoside 5'-diphosphate + ATP = a ribonucleoside 5'-triphosphate + ADP. In terms of biological role, major role in the synthesis of nucleoside triphosphates other than ATP. The ATP gamma phosphate is transferred to the NDP beta phosphate via a ping-pong mechanism, using a phosphorylated active-site intermediate. The polypeptide is Nucleoside diphosphate kinase (Prochlorococcus marinus (strain NATL1A)).